A 72-amino-acid polypeptide reads, in one-letter code: Translation initiation factor IF-1 (72 aa).

The S1-like domain occupies 1 to 72 (MAKEDVIEIE…TRGRITYRFK (72 aa)).

It belongs to the IF-1 family. As to quaternary structure, component of the 30S ribosomal translation pre-initiation complex which assembles on the 30S ribosome in the order IF-2 and IF-3, IF-1 and N-formylmethionyl-tRNA(fMet); mRNA recruitment can occur at any time during PIC assembly.

The protein localises to the cytoplasm. In terms of biological role, one of the essential components for the initiation of protein synthesis. Stabilizes the binding of IF-2 and IF-3 on the 30S subunit to which N-formylmethionyl-tRNA(fMet) subsequently binds. Helps modulate mRNA selection, yielding the 30S pre-initiation complex (PIC). Upon addition of the 50S ribosomal subunit IF-1, IF-2 and IF-3 are released leaving the mature 70S translation initiation complex. This is Translation initiation factor IF-1 from Streptococcus suis (strain 05ZYH33).